We begin with the raw amino-acid sequence, 426 residues long: MNENLLMIIGSQFGDEGKGKFVDLLSNQFDYIVRYQGGDNAGHTIVFDNKTFKLRLIPSGIFNPRNRVVIANGVVLNPITLLEEVKYLKSNGVSTDNLYVSDKCHVIFNFHIEMDKMLEELKGSKKIGTTNKGIGPCYTDKVSRVGIRVCDLFDFNVLLAKIQDNLQIKNVLFSRYGKQIFNPYTIAKQYYELGQQIKPFVINTVALLNYAYERNNKILFEGAQGIMLDIDYGTYPYVTSSNVIGLVSSGTGLAINKIKRILGVVKAYSTRVGSGPFVSEIEEENLAHYIREKGHEYGTVTKRPRRIGWLDLFLLKYVVTVSGISEIAITLIDVLSKVQKIKVCIGYKRNDKQLNYMPSSIEELQKCEPIYEILDGWSEDVSRIKSYDDLPLNLKRYISYIENFLKVRVRFVSVGPDRNQTIIKDN.

Residues 14 to 20 (GDEGKGK) and 42 to 44 (GHT) contribute to the GTP site. Residue D15 is the Proton acceptor of the active site. Mg(2+) contacts are provided by D15 and G42. Residues 15–18 (DEGK), 40–43 (NAGH), T130, R144, Q224, T239, and R303 each bind IMP. The Proton donor role is filled by H43. A substrate-binding site is contributed by 299–305 (TVTKRPR). Residues R305, 331–333 (LID), and 413–415 (SVG) contribute to the GTP site.

This sequence belongs to the adenylosuccinate synthetase family. Homodimer. It depends on Mg(2+) as a cofactor.

The protein resides in the cytoplasm. It catalyses the reaction IMP + L-aspartate + GTP = N(6)-(1,2-dicarboxyethyl)-AMP + GDP + phosphate + 2 H(+). Its pathway is purine metabolism; AMP biosynthesis via de novo pathway; AMP from IMP: step 1/2. In terms of biological role, plays an important role in the de novo pathway of purine nucleotide biosynthesis. Catalyzes the first committed step in the biosynthesis of AMP from IMP. This Malacoplasma penetrans (strain HF-2) (Mycoplasma penetrans) protein is Adenylosuccinate synthetase.